Reading from the N-terminus, the 28-residue chain is Potassium channel toxin alpha-KTx 13.2 (28 aa).

3 cysteine pairs are disulfide-bonded: Cys2-Cys19, Cys6-Cys24, and Cys10-Cys26. Residues 17-24 (IKCINGSC) are interaction with Ca(2+)-activated K(+) channels.

Belongs to the short scorpion toxin superfamily. Potassium channel inhibitor family. Alpha-KTx 13 subfamily. In terms of tissue distribution, expressed by the venom gland.

The protein localises to the secreted. In terms of biological role, potent and selective inhibitor of Kv1.2/KCNA2 potassium channels. The protein is Potassium channel toxin alpha-KTx 13.2 of Orthochirus scrobiculosus (Central Asian scorpion).